Here is a 308-residue protein sequence, read N- to C-terminus: N-acetylmuramic acid 6-phosphate etherase (308 aa).

An SIS domain is found at 63-226 (IVDAFACGGR…STASMIRSGK (164 aa)). Glu91 (proton donor) is an active-site residue. Glu122 is an active-site residue.

This sequence belongs to the GCKR-like family. MurNAc-6-P etherase subfamily. Homodimer.

It catalyses the reaction N-acetyl-D-muramate 6-phosphate + H2O = N-acetyl-D-glucosamine 6-phosphate + (R)-lactate. It participates in amino-sugar metabolism; 1,6-anhydro-N-acetylmuramate degradation. Its pathway is amino-sugar metabolism; N-acetylmuramate degradation. It functions in the pathway cell wall biogenesis; peptidoglycan recycling. In terms of biological role, specifically catalyzes the cleavage of the D-lactyl ether substituent of MurNAc 6-phosphate, producing GlcNAc 6-phosphate and D-lactate. Together with AnmK, is also required for the utilization of anhydro-N-acetylmuramic acid (anhMurNAc) either imported from the medium or derived from its own cell wall murein, and thus plays a role in cell wall recycling. The protein is N-acetylmuramic acid 6-phosphate etherase of Colwellia psychrerythraea (strain 34H / ATCC BAA-681) (Vibrio psychroerythus).